An 833-amino-acid chain; its full sequence is Major vault protein (833 aa).

MVP repeat units lie at residues 54–118 (RHYC…QLIP), 119–170 (PNTG…TVIY), 171–223 (PNTA…TMLS), 224–278 (DLKA…VSLS), 280–328 (KEYV…LVVG), 329–380 (KEEA…MALD), and 381–433 (KNEG…SIQT).

In terms of assembly, the vault ribonucleoprotein particle is a huge (400 A x 670 A) cage structure of 12.9 MDa. It consists of a dimer of half-vaults, with each half-vault comprising 39 identical major vault protein (MVP) chains, PARP4 and one or more vault RNAs (vRNAs).

The protein resides in the cytoplasm. The protein localises to the nucleus. Its function is as follows. Required for normal vault structure. Vaults are multi-subunit structures that may act as scaffolds for proteins involved in signal transduction. Vaults may also play a role in nucleo-cytoplasmic transport. This is Major vault protein from Leishmania infantum.